The primary structure comprises 180 residues: Shikimate kinase (180 aa).

14-19 is an ATP binding site; the sequence is GAGKSS. Ser-18 serves as a coordination point for Mg(2+). Residues Asp-36, Arg-60, and Gly-82 each contribute to the substrate site. Arg-120 serves as a coordination point for ATP. Arg-139 lines the substrate pocket.

The protein belongs to the shikimate kinase family. Monomer. Mg(2+) is required as a cofactor.

Its subcellular location is the cytoplasm. It carries out the reaction shikimate + ATP = 3-phosphoshikimate + ADP + H(+). The protein operates within metabolic intermediate biosynthesis; chorismate biosynthesis; chorismate from D-erythrose 4-phosphate and phosphoenolpyruvate: step 5/7. Catalyzes the specific phosphorylation of the 3-hydroxyl group of shikimic acid using ATP as a cosubstrate. This is Shikimate kinase from Xylella fastidiosa (strain M23).